We begin with the raw amino-acid sequence, 204 residues long: Small ribosomal subunit protein uS4 (204 aa).

The tract at residues Ser-25 to Tyr-47 is disordered. The region spanning Arg-93–Ala-156 is the S4 RNA-binding domain.

Belongs to the universal ribosomal protein uS4 family. As to quaternary structure, part of the 30S ribosomal subunit. Contacts protein S5. The interaction surface between S4 and S5 is involved in control of translational fidelity.

In terms of biological role, one of the primary rRNA binding proteins, it binds directly to 16S rRNA where it nucleates assembly of the body of the 30S subunit. With S5 and S12 plays an important role in translational accuracy. In Rhodospirillum centenum (strain ATCC 51521 / SW), this protein is Small ribosomal subunit protein uS4.